Here is a 517-residue protein sequence, read N- to C-terminus: B3 domain-containing protein REM1 (517 aa).

A DNA-binding region (TF-B3 1) is located at residues 7–92; sequence FSLFQQKFRT…VFHVAVVSPS (86 aa). The span at 115-140 shows a compositional bias: acidic residues; the sequence is DDVDDDDYGQDDEDDDDDDDEGEDNI. The interval 115 to 158 is disordered; that stretch reads DDVDDDDYGQDDEDDDDDDDEGEDNIENISEKTDKRQEADSSSD. The segment covering 143-157 has biased composition (basic and acidic residues); it reads ISEKTDKRQEADSSS. DNA-binding regions (TF-B3) lie at residues 162 to 259 and 285 to 385; these read FITA…CPQE and FLIV…FCSK. Residues 393–415 are disordered; that stretch reads GKGNQRTRKKRACETAPQPRNVK.

As to expression, expressed in the shoot apical meristem (SAM), in the inflorescence apex and flowers.

Its subcellular location is the nucleus. May play a role in flower development. This chain is B3 domain-containing protein REM1 (REM1), found in Arabidopsis thaliana (Mouse-ear cress).